The chain runs to 574 residues: Sulfate adenylyltransferase (574 aa).

Residues 1–169 (MANPPHGGVL…IEAINKLNHY (169 aa)) are N-terminal. The segment at 170–394 (DYVALRYTPA…LRESSPPRHT (225 aa)) is catalytic. Glutamine 197 lines the sulfate pocket. ATP is bound by residues 197–200 (QTRN) and 291–294 (GRDH). Residues threonine 198, arginine 199, and asparagine 200 contribute to the active site. Position 199 (arginine 199) interacts with sulfate. Sulfate is bound at residue alanine 295. Valine 333 contacts ATP. The allosteric regulation domain; adenylyl-sulfate kinase-like stretch occupies residues 395 to 574 (QGFTIFLTGY…LETEGFFDRS (180 aa)). 3'-phosphoadenylyl sulfate is bound by residues 434–437 (DTVR), arginine 451, 477–478 (IA), and arginine 516.

This sequence in the N-terminal section; belongs to the sulfate adenylyltransferase family. The protein in the C-terminal section; belongs to the APS kinase family. As to quaternary structure, homohexamer. Dimer of trimers.

Its subcellular location is the cytoplasm. It catalyses the reaction sulfate + ATP + H(+) = adenosine 5'-phosphosulfate + diphosphate. Its pathway is sulfur metabolism; hydrogen sulfide biosynthesis; sulfite from sulfate: step 1/3. Its activity is regulated as follows. Allosterically inhibited by 3'-phosphoadenosine 5'-phosphosulfate (PAPS). In terms of biological role, catalyzes the first intracellular reaction of sulfate assimilation, forming adenosine-5'-phosphosulfate (APS) from inorganic sulfate and ATP. Plays an important role in sulfate activation as a component of the biosynthesis pathway of sulfur-containing amino acids. This is Sulfate adenylyltransferase from Neosartorya fischeri (strain ATCC 1020 / DSM 3700 / CBS 544.65 / FGSC A1164 / JCM 1740 / NRRL 181 / WB 181) (Aspergillus fischerianus).